Consider the following 193-residue polypeptide: 3-isopropylmalate dehydratase small subunit (193 aa).

This sequence belongs to the LeuD family. LeuD type 1 subfamily. In terms of assembly, heterodimer of LeuC and LeuD.

It carries out the reaction (2R,3S)-3-isopropylmalate = (2S)-2-isopropylmalate. It participates in amino-acid biosynthesis; L-leucine biosynthesis; L-leucine from 3-methyl-2-oxobutanoate: step 2/4. In terms of biological role, catalyzes the isomerization between 2-isopropylmalate and 3-isopropylmalate, via the formation of 2-isopropylmaleate. The polypeptide is 3-isopropylmalate dehydratase small subunit (Bacillus cytotoxicus (strain DSM 22905 / CIP 110041 / 391-98 / NVH 391-98)).